A 99-amino-acid polypeptide reads, in one-letter code: Malonate decarboxylase acyl carrier protein (99 aa).

Serine 25 carries the O-(phosphoribosyl dephospho-coenzyme A)serine modification.

This sequence belongs to the MdcC family. Covalently binds the prosthetic group of malonate decarboxylase.

Its subcellular location is the cytoplasm. In terms of biological role, subunit of malonate decarboxylase, it is an acyl carrier protein to which acetyl and malonyl thioester residues are bound via a 2'-(5''-phosphoribosyl)-3'-dephospho-CoA prosthetic group and turn over during the catalytic mechanism. The chain is Malonate decarboxylase acyl carrier protein from Pseudomonas savastanoi pv. phaseolicola (strain 1448A / Race 6) (Pseudomonas syringae pv. phaseolicola (strain 1448A / Race 6)).